The following is a 102-amino-acid chain: MYAIIATGGKQYKVAEGDIIKVEKLGVEAGATVSFDQVLVLNNGQVVVGNPTVAGASVSATVVEEGKNKKVIVYRYKRKSGYHKKNGHRQSYTKVKIDKINA.

The protein belongs to the bacterial ribosomal protein bL21 family. Part of the 50S ribosomal subunit. Contacts protein L20.

In terms of biological role, this protein binds to 23S rRNA in the presence of protein L20. This chain is Large ribosomal subunit protein bL21, found in Lachnoclostridium phytofermentans (strain ATCC 700394 / DSM 18823 / ISDg) (Clostridium phytofermentans).